The sequence spans 403 residues: Glucose/galactose-binding lipoprotein (403 aa).

Residues 1 to 25 (MKENSCTACSRRLALFVGAAVLVVG) form the signal peptide. C26 carries N-palmitoyl cysteine lipidation. A lipid anchor (S-diacylglycerol cysteine) is attached at C26.

The protein belongs to the bacterial solute-binding protein 2 family.

Its subcellular location is the cell membrane. May be involved in the transport of sugars. May have a role in chemotaxis. This Treponema pallidum (strain Nichols) protein is Glucose/galactose-binding lipoprotein (mglB).